Here is a 426-residue protein sequence, read N- to C-terminus: MDQNIIINILRKEMMPGLGVTEPASIALSSAKAYEVIGGEIKNIKIIADPGLFKNAFSCAIPGTKEVGNEMAALLGAICGDASLGLECLRKIKKEDVSKAKTMLDKIHIEIKSQTEGLYVESIVTTNNGIGRTIIRYKHDNIVLVEKNNKILYQKENTLNKSNNFSQEAIDSKKITEMKLDEIVEFVNNVNYEKIEFLLESIKMNKKLSEKGLEGLGIGLGKLILESCNENNYELYAEALTCSAIDARVSGAAVPAMTVTGSGNHGIIATLPLLAIKEKKNLNNEMLARSIALSYIINIYIKEFSGKLSAFCGCAVAAGTGVSAGICYLLGGRLKEIENTIKNMASNITGMICTGGNLACSLKANTGVKAAFLSAKMALKNIVIPNKCGIVSNSIEDTMKNIGRIAYPGMMQTDKEILNIMIESSK.

It belongs to the UPF0597 family.

The chain is UPF0597 protein CLI_1810 from Clostridium botulinum (strain Langeland / NCTC 10281 / Type F).